The following is a 252-amino-acid chain: tRNA pseudouridine synthase A (252 aa).

Catalysis depends on aspartate 52, which acts as the Nucleophile. Tyrosine 112 provides a ligand contact to substrate.

Belongs to the tRNA pseudouridine synthase TruA family. As to quaternary structure, homodimer.

The catalysed reaction is uridine(38/39/40) in tRNA = pseudouridine(38/39/40) in tRNA. Formation of pseudouridine at positions 38, 39 and 40 in the anticodon stem and loop of transfer RNAs. The sequence is that of tRNA pseudouridine synthase A from Porphyromonas gingivalis (strain ATCC 33277 / DSM 20709 / CIP 103683 / JCM 12257 / NCTC 11834 / 2561).